The chain runs to 861 residues: Bifunctional uridylyltransferase/uridylyl-removing enzyme (861 aa).

Residues 1-321 form a uridylyltransferase region; the sequence is MKNDNRIIKN…VYHQKQKIIR (321 aa). The segment at 322 to 678 is uridylyl-removing; that stretch reads LDDEFQLSNR…IMPHHSQGGT (357 aa). An HD domain is found at 440–562; it reads VDQHTLFVIR…LPHARYLDYL (123 aa). ACT domains follow at residues 679–760 and 788–861; these read EVFI…AVSR and QLFL…KSKY.

It belongs to the GlnD family. Mg(2+) serves as cofactor.

It carries out the reaction [protein-PII]-L-tyrosine + UTP = [protein-PII]-uridylyl-L-tyrosine + diphosphate. It catalyses the reaction [protein-PII]-uridylyl-L-tyrosine + H2O = [protein-PII]-L-tyrosine + UMP + H(+). Its activity is regulated as follows. Uridylyltransferase (UTase) activity is inhibited by glutamine, while glutamine activates uridylyl-removing (UR) activity. Modifies, by uridylylation and deuridylylation, the PII regulatory proteins (GlnB and homologs), in response to the nitrogen status of the cell that GlnD senses through the glutamine level. Under low glutamine levels, catalyzes the conversion of the PII proteins and UTP to PII-UMP and PPi, while under higher glutamine levels, GlnD hydrolyzes PII-UMP to PII and UMP (deuridylylation). Thus, controls uridylylation state and activity of the PII proteins, and plays an important role in the regulation of nitrogen assimilation and metabolism. The chain is Bifunctional uridylyltransferase/uridylyl-removing enzyme from Legionella pneumophila (strain Paris).